Consider the following 220-residue polypeptide: Fructose-6-phosphate aldolase 1 (220 aa).

Residue Lys85 is the Schiff-base intermediate with substrate of the active site.

The protein belongs to the transaldolase family. Type 3A subfamily. As to quaternary structure, homodecamer.

It is found in the cytoplasm. The catalysed reaction is beta-D-fructose 6-phosphate = dihydroxyacetone + D-glyceraldehyde 3-phosphate. In terms of biological role, catalyzes the reversible formation of fructose 6-phosphate from dihydroxyacetone and D-glyceraldehyde 3-phosphate via an aldolization reaction. This Escherichia coli O157:H7 protein is Fructose-6-phosphate aldolase 1 (fsaA).